A 553-amino-acid chain; its full sequence is Chaperonin GroEL (553 aa).

Residues 29 to 32 (TLGP), Lys50, 86 to 90 (DGTTT), Gly424, and Asp504 contribute to the ATP site.

The protein belongs to the chaperonin (HSP60) family. As to quaternary structure, forms a cylinder of 14 subunits composed of two heptameric rings stacked back-to-back. Interacts with the co-chaperonin GroES.

Its subcellular location is the cytoplasm. The enzyme catalyses ATP + H2O + a folded polypeptide = ADP + phosphate + an unfolded polypeptide.. Functionally, together with its co-chaperonin GroES, plays an essential role in assisting protein folding. The GroEL-GroES system forms a nano-cage that allows encapsulation of the non-native substrate proteins and provides a physical environment optimized to promote and accelerate protein folding. This is Chaperonin GroEL from Koribacter versatilis (strain Ellin345).